The primary structure comprises 572 residues: Dihydroxy-acid dehydratase (572 aa).

C57 serves as a coordination point for [2Fe-2S] cluster. Mg(2+) is bound at residue D89. Position 130 (C130) interacts with [2Fe-2S] cluster. Residues D131 and K132 each coordinate Mg(2+). The residue at position 132 (K132) is an N6-carboxylysine. C202 provides a ligand contact to [2Fe-2S] cluster. E453 is a binding site for Mg(2+). The active-site Proton acceptor is the S479.

Belongs to the IlvD/Edd family. As to quaternary structure, homodimer. [2Fe-2S] cluster serves as cofactor. The cofactor is Mg(2+).

It catalyses the reaction (2R)-2,3-dihydroxy-3-methylbutanoate = 3-methyl-2-oxobutanoate + H2O. The catalysed reaction is (2R,3R)-2,3-dihydroxy-3-methylpentanoate = (S)-3-methyl-2-oxopentanoate + H2O. The protein operates within amino-acid biosynthesis; L-isoleucine biosynthesis; L-isoleucine from 2-oxobutanoate: step 3/4. Its pathway is amino-acid biosynthesis; L-valine biosynthesis; L-valine from pyruvate: step 3/4. Its function is as follows. Functions in the biosynthesis of branched-chain amino acids. Catalyzes the dehydration of (2R,3R)-2,3-dihydroxy-3-methylpentanoate (2,3-dihydroxy-3-methylvalerate) into 2-oxo-3-methylpentanoate (2-oxo-3-methylvalerate) and of (2R)-2,3-dihydroxy-3-methylbutanoate (2,3-dihydroxyisovalerate) into 2-oxo-3-methylbutanoate (2-oxoisovalerate), the penultimate precursor to L-isoleucine and L-valine, respectively. This is Dihydroxy-acid dehydratase from Streptococcus thermophilus (strain CNRZ 1066).